A 904-amino-acid polypeptide reads, in one-letter code: Alanine--tRNA ligase (904 aa).

4 residues coordinate Zn(2+): histidine 584, histidine 588, cysteine 687, and histidine 691.

It belongs to the class-II aminoacyl-tRNA synthetase family. The cofactor is Zn(2+).

The protein localises to the cytoplasm. The enzyme catalyses tRNA(Ala) + L-alanine + ATP = L-alanyl-tRNA(Ala) + AMP + diphosphate. Catalyzes the attachment of alanine to tRNA(Ala) in a two-step reaction: alanine is first activated by ATP to form Ala-AMP and then transferred to the acceptor end of tRNA(Ala). Also edits incorrectly charged Ser-tRNA(Ala) and Gly-tRNA(Ala) via its editing domain. This chain is Alanine--tRNA ligase, found in Mycobacterium bovis (strain ATCC BAA-935 / AF2122/97).